A 479-amino-acid chain; its full sequence is Altronate oxidoreductase (479 aa).

Position 18 to 29 (18 to 29 (IIQFGEGNFLRA)) interacts with NAD(+).

The protein belongs to the mannitol dehydrogenase family. UxaB subfamily.

The enzyme catalyses D-altronate + NAD(+) = keto-D-tagaturonate + NADH + H(+). It participates in carbohydrate metabolism; pentose and glucuronate interconversion. This chain is Altronate oxidoreductase, found in Bacteroides thetaiotaomicron (strain ATCC 29148 / DSM 2079 / JCM 5827 / CCUG 10774 / NCTC 10582 / VPI-5482 / E50).